The following is a 64-amino-acid chain: SPbeta prophage-derived uncharacterized protein YosJ (64 aa).

The chain is SPbeta prophage-derived uncharacterized protein YosJ (yosJ) from Bacillus subtilis (strain 168).